Here is a 179-residue protein sequence, read N- to C-terminus: Large ribosomal subunit protein uL5 (179 aa).

The protein belongs to the universal ribosomal protein uL5 family. Part of the 50S ribosomal subunit; part of the 5S rRNA/L5/L18/L25 subcomplex. Contacts the 5S rRNA and the P site tRNA. Forms a bridge to the 30S subunit in the 70S ribosome.

This is one of the proteins that bind and probably mediate the attachment of the 5S RNA into the large ribosomal subunit, where it forms part of the central protuberance. In the 70S ribosome it contacts protein S13 of the 30S subunit (bridge B1b), connecting the 2 subunits; this bridge is implicated in subunit movement. Contacts the P site tRNA; the 5S rRNA and some of its associated proteins might help stabilize positioning of ribosome-bound tRNAs. The polypeptide is Large ribosomal subunit protein uL5 (Citrobacter koseri (strain ATCC BAA-895 / CDC 4225-83 / SGSC4696)).